Here is a 510-residue protein sequence, read N- to C-terminus: ATP synthase subunit alpha (510 aa).

Gly169–Thr176 is a binding site for ATP.

Belongs to the ATPase alpha/beta chains family. In terms of assembly, F-type ATPases have 2 components, CF(1) - the catalytic core - and CF(0) - the membrane proton channel. CF(1) has five subunits: alpha(3), beta(3), gamma(1), delta(1), epsilon(1). CF(0) has four main subunits: a(1), b(1), b'(1) and c(9-12).

Its subcellular location is the cell inner membrane. It catalyses the reaction ATP + H2O + 4 H(+)(in) = ADP + phosphate + 5 H(+)(out). In terms of biological role, produces ATP from ADP in the presence of a proton gradient across the membrane. The alpha chain is a regulatory subunit. This Rhodopseudomonas palustris (strain HaA2) protein is ATP synthase subunit alpha.